A 141-amino-acid polypeptide reads, in one-letter code: Cystatin (141 aa).

The first 26 residues, 1–26 (MLHSQLPVAAPLRLLCALLLLPSVTM), serve as a signal peptide directing secretion. The Cystatin domain occupies 29–129 (GGLSPRSVTD…CRFQVWSRPW (101 aa)). The Secondary area of contact signature appears at 73–77 (QVVTG). Intrachain disulfides connect cysteine 91-cysteine 107 and cysteine 120-cysteine 140.

It belongs to the cystatin family. Expressed at a low level by the venom gland (at protein level).

It is found in the secreted. Its function is as follows. Inhibits various C1 cysteine proteases including cathepsin L, papain and cathepsin B. This protein has no toxic activity and its function in the venom is unknown. It may play a role as a housekeeping or regulatory protein. This chain is Cystatin, found in Hoplocephalus stephensii (Stephens's banded snake).